A 187-amino-acid polypeptide reads, in one-letter code: Protein GrpE (187 aa).

Residues 1–23 (MADEQNLDAQAQDQAAEAGAGEE) are disordered. The span at 7 to 23 (LDAQAQDQAAEAGAGEE) shows a compositional bias: low complexity.

The protein belongs to the GrpE family. Homodimer.

The protein resides in the cytoplasm. In terms of biological role, participates actively in the response to hyperosmotic and heat shock by preventing the aggregation of stress-denatured proteins, in association with DnaK and GrpE. It is the nucleotide exchange factor for DnaK and may function as a thermosensor. Unfolded proteins bind initially to DnaJ; upon interaction with the DnaJ-bound protein, DnaK hydrolyzes its bound ATP, resulting in the formation of a stable complex. GrpE releases ADP from DnaK; ATP binding to DnaK triggers the release of the substrate protein, thus completing the reaction cycle. Several rounds of ATP-dependent interactions between DnaJ, DnaK and GrpE are required for fully efficient folding. In Pseudomonas savastanoi pv. phaseolicola (strain 1448A / Race 6) (Pseudomonas syringae pv. phaseolicola (strain 1448A / Race 6)), this protein is Protein GrpE.